The following is a 3021-amino-acid chain: Genome polyprotein (3021 aa).

N-acetylserine; by host is present on serine 2. Positions 2 to 23 are interaction with STAT1; the sequence is STLPKPQRKTKRNTIRRPQDVK. The tract at residues 2 to 58 is interaction with EIF2AK2/PKR; the sequence is STLPKPQRKTKRNTIRRPQDVKFPGGGQIVGGVYVLPRRGPRLGVRATRKTSERSQP. Residues 2–59 form an interaction with DDX3X region; that stretch reads STLPKPQRKTKRNTIRRPQDVKFPGGGQIVGGVYVLPRRGPRLGVRATRKTSERSQPR. The interval 2-75 is disordered; it reads STLPKPQRKT…PKARRSEGRS (74 aa). Topologically, residues 2–168 are cytoplasmic; that stretch reads STLPKPQRKT…EDGINFATGN (167 aa). 2 consecutive short sequence motifs (nuclear localization signal) follow at residues 5 to 13 and 38 to 43; these read PKPQRKTKR and PRRGPR. Basic residues predominate over residues 7 to 16; the sequence is PQRKTKRNTI. Phosphoserine; by host is present on serine 53. 2 consecutive short sequence motifs (nuclear localization signal) follow at residues 58–64 and 66–71; these read PRGRRQP and PKARRS. The segment covering 58-68 has biased composition (basic residues); sequence PRGRRQPIPKA. Serine 99 carries the post-translational modification Phosphoserine; by host. An important for endoplasmic reticulum and mitochondrial localization region spans residues 112-152; sequence PRRRSRNLGKVIDTLTCGFADLMGYIPLVGAPVGGVARALA. Serine 116 carries the post-translational modification Phosphoserine; by host PKA. The interval 122–173 is interaction with APOA2; the sequence is VIDTLTCGFADLMGYIPLVGAPVGGVARALAHGVRALEDGINFATGNLPGCS. Residues 164–167 form an important for lipid droplets localization region; the sequence is FATG. Residues 169-189 traverse the membrane as a helical segment; sequence LPGCSFSIFLLALFSCLIHPA. Residues 178 to 191 constitute a propeptide, ER anchor for the core protein, removed in mature form by host signal peptidase; the sequence is LLALFSCLIHPAAS. Residues 190-358 lie on the Lumenal side of the membrane; it reads ASLEWRNTSG…AGAHWGILAG (169 aa). Asparagine 196, asparagine 209, and asparagine 234 each carry an N-linked (GlcNAc...) asparagine; by host glycan. The important for fusion stretch occupies residues 265–296; that stretch reads LVGAATMCSALYVGDMCGAVFLVGQAFTFRPR. N-linked (GlcNAc...) asparagine; by host glycosylation is present at asparagine 305. The chain crosses the membrane as a helical span at residues 359–379; it reads LAYYSMQGNWAKVAIIMVMFS. Topologically, residues 380-731 are lumenal; that stretch reads GVDAHTYTTG…WEFVILVFLL (352 aa). The interval 385–412 is HVR1; sequence TYTTGGTASRHTQAFAGLFDIGPQQKLQ. N-linked (GlcNAc...) (high mannose) asparagine; by host glycans are attached at residues asparagine 417, asparagine 423, and asparagine 430. 4 disulfide bridges follow: cysteine 429/cysteine 553, cysteine 452/cysteine 459, cysteine 487/cysteine 495, and cysteine 504/cysteine 509. Asparagine 448 is a glycosylation site (N-linked (GlcNAc...) asparagine; by host). An HVR2 region spans residues 474-479; it reads DANITG. The N-linked (GlcNAc...) asparagine; by host glycan is linked to asparagine 476. Residues 481 to 494 form a CD81-binding 1 region; that stretch reads SDDRPYCWHYAPRP. A glycan (N-linked (GlcNAc...) asparagine; by host) is linked at asparagine 533. Residues 545–552 are CD81-binding 2; sequence PPSGRWFG. Asparagine 557 is a glycosylation site (N-linked (GlcNAc...) asparagine; by host). An intrachain disulfide couples cysteine 565 to cysteine 570. A glycan (N-linked (GlcNAc...) asparagine; by host) is linked at asparagine 578. Cystine bridges form between cysteine 587–cysteine 591, cysteine 603–cysteine 626, and cysteine 613–cysteine 650. Residue asparagine 651 is glycosylated (N-linked (GlcNAc...) (high mannose) asparagine; by host). A disulfide bond links cysteine 658 and cysteine 683. The segment at 666 to 677 is PKR/eIF2-alpha phosphorylation homology domain (PePHD); sequence SEQHPLLHSTTE. A helical transmembrane segment spans residues 732-752; sequence LADARVCVALWLMLMISQTEA. Over 753 to 763 the chain is Lumenal; that stretch reads ALENLVTLNAV. Residues 764 to 784 form a helical membrane-spanning segment; that stretch reads AAAGTHGIGWYLVAFCAAWYV. Over 785 to 787 the chain is Cytoplasmic; sequence RGK. The helical transmembrane segment at 788–809 threads the bilayer; it reads LVPLVTYSLTGLWSLALLVLLL. Residues 810–819 lie on the Lumenal side of the membrane; it reads PQRAYAWSGE. The chain crosses the membrane as a helical span at residues 820-840; sequence DSATLGAGVLVLFGFFTLSPW. The Cytoplasmic segment spans residues 841 to 844; the sequence is YKHW. Residues 845-864 form a helical membrane-spanning segment; it reads IGRLMWWNQYTICRCESALH. Over 865 to 887 the chain is Lumenal; sequence VWVPPLLARGSRDGVILLTSLLY. A helical transmembrane segment spans residues 888-908; the sequence is PSLIFDITKLLMAVLGPLYLI. In terms of domain architecture, Peptidase C18 spans 905-1032; it reads LYLIQATITT…DYREMGWRLL (128 aa). Residues 909–1663 are Cytoplasmic-facing; sequence QATITTTPYF…CMSADLEVTT (755 aa). Residues 910–1212 form a protease NS2-3 region; the sequence is ATITTTPYFV…PVETLSTQAR (303 aa). Cysteine 928 is lipidated: S-palmitoyl cysteine; by host. The interaction with host SCPS1 stretch occupies residues 935-955; it reads IGGKYFQMIILSIGRWFNTYL. Active-site for protease NS2 activity; shared with dimeric partner residues include histidine 958, glutamate 978, and cysteine 999. The 182-residue stretch at 1033–1214 folds into the Peptidase S29 domain; sequence APITAYAQQT…ETLSTQARSP (182 aa). Active-site charge relay system; for serine protease NS3 activity residues include histidine 1089 and aspartate 1113. Positions 1129 and 1131 each coordinate Zn(2+). Serine 1171 functions as the Charge relay system; for serine protease NS3 activity in the catalytic mechanism. Residues cysteine 1177 and histidine 1181 each contribute to the Zn(2+) site. Residues 1223 to 1375 form the Helicase ATP-binding domain; the sequence is PAVPQSYQVG…SNIEEVALGS (153 aa). 1236–1243 lines the ATP pocket; the sequence is APTGSGKS. The Mg(2+) site is built by serine 1243 and glutamate 1323. The DECH box motif lies at 1322–1325; the sequence is DECH. Positions 1382 to 1544 constitute a Helicase C-terminal domain; the sequence is YGKAIPIALL…DLQPAETTVR (163 aa). Residues 1492 to 1504 form an RNA-binding region; the sequence is QRRGRTGRGRLGT. A helical membrane pass occupies residues 1664–1684; the sequence is STWVLLGGVLAALAAYCLSVG. The tract at residues 1685-1696 is NS3-binding; the sequence is CVVIVGHIELEG. At 1685-1811 the chain is on the cytoplasmic side; it reads CVVIVGHIEL…SVTSPLTTNQ (127 aa). Residues 1812–1830 traverse the membrane as a helical segment; that stretch reads TMFFNILGGWVATHLAGPQ. Over 1831–1834 the chain is Lumenal; it reads SSSA. A helical membrane pass occupies residues 1835–1855; it reads FVVSGLAGAAIGGIGLGRVLL. A topological domain (cytoplasmic) is located at residue aspartate 1856. Residues 1857 to 1877 traverse the membrane as a helical segment; sequence ILAGYGAGVSGALVAFKIMGG. Over 1878–1887 the chain is Lumenal; it reads ECPTAEDMVN. The helical transmembrane segment at 1888–1908 threads the bilayer; the sequence is LLPAILSPGALVVGVICAAIL. Residues 1909–1978 are Cytoplasmic-facing; sequence RRHVGPGEGA…WINEDYPSPC (70 aa). Cysteine 1978 carries the S-palmitoyl cysteine; by host lipid modification. Residues 1979–2008 lie within the membrane without spanning it; it reads SDDWLRTIWDWVCSVLADFKAWLSAKIMPA. Residues 2009-3000 lie on the Cytoplasmic side of the membrane; it reads LPGLPFISCQ…YHSVSRARTR (992 aa). Zn(2+)-binding residues include cysteine 2017, cysteine 2035, cysteine 2037, and cysteine 2058. The tract at residues 2126–2214 is FKBP8-binding; that stretch reads EFFTEVDGVR…ASSSASQLSA (89 aa). The transcriptional activation stretch occupies residues 2126-2338; that stretch reads EFFTEVDGVR…PVPPPRRKRT (213 aa). An interaction with non-structural protein 4A region spans residues 2141–2145; the sequence is PPCKP. A disordered region spans residues 2193–2215; the sequence is ARRLARGSPPSEASSSASQLSAP. The segment at 2195–2448 is interaction with host SKP2; the sequence is RLARGSPPSE…ALITPCSAEE (254 aa). Phosphoserine; by host is present on residues serine 2200, serine 2203, serine 2207, serine 2210, serine 2213, and serine 2216. A compositionally biased stretch (low complexity) spans 2200 to 2215; that stretch reads SPPSEASSSASQLSAP. The interval 2216-2255 is ISDR; it reads SLKATCQTHRPHPDAELVDANLLWRQEMGSNITRVESETK. Positions 2216–2281 are interaction with EIF2AK2/PKR; sequence SLKATCQTHR…VEPSVAAECF (66 aa). Residues 2255 to 2312 form an NS4B-binding region; it reads KVVVLDSFEPLRAETDDVEPSVAAECFKKPPKYPPALPIWARPDYNPPLLDRWKAPDY. The segment at 2305 to 2387 is V3; that stretch reads DRWKAPDYVP…STTSKVPPSP (83 aa). The SH3-binding signature appears at 2328-2331; that stretch reads PPVP. A Nuclear localization signal motif is present at residues 2333–2341; the sequence is PRRKRTIQL. Lysine 2356 participates in a covalent cross-link: Glycyl lysine isopeptide (Lys-Gly) (interchain with G-Cter in ubiquitin). The tract at residues 2356-2417 is disordered; that stretch reads KSFPSSKPQE…DPDLSCDSWS (62 aa). 2 stretches are compositionally biased toward low complexity: residues 2359 to 2381 and 2388 to 2401; these read PSSK…STTS and GGES…SMPP. Serine 2459 and serine 2472 each carry phosphoserine; by host. The region spanning 2644 to 2762 is the RdRp catalytic domain; that stretch reads PLGFSYDTRC…VAESDGVDED (119 aa). The Mg(2+) site is built by aspartate 2650, aspartate 2748, and aspartate 2749. A helical transmembrane segment spans residues 3001-3021; the sequence is HLLLCLLLLTVGVGIFLLPAR.

It belongs to the hepacivirus polyprotein family. Homooligomer. Interacts with E1 (via C-terminus). Interacts with the non-structural protein 5A. Interacts (via N-terminus) with host STAT1 (via SH2 domain); this interaction results in decreased STAT1 phosphorylation and ubiquitin-mediated proteasome-dependent STAT1 degradation, leading to decreased IFN-stimulated gene transcription. Interacts with host STAT3; this interaction constitutively activates STAT3. Interacts with host LTBR receptor. Interacts with host TNFRSF1A receptor and possibly induces apoptosis. Interacts with host HNRPK. Interacts with host YWHAE. Interacts with host UBE3A/E6AP. Interacts with host DDX3X. Interacts with host APOA2. Interacts with host RXRA protein. Interacts with host SP110 isoform 3/Sp110b; this interaction sequesters the transcriptional corepressor SP110 away from the nucleus. Interacts with host CREB3 nuclear transcription protein; this interaction triggers cell transformation. Interacts with host ACY3. Interacts with host C1QR1. Interacts with host RBM24; this interaction, which enhances the interaction of the mature core protein with 5'-UTR, may inhibit viral translation and favor replication. Interacts with host EIF2AK2/PKR; this interaction induces the autophosphorylation of EIF2AK2. Part of the viral assembly initiation complex composed of NS2, E1, E2, NS3, NS4A, NS5A and the mature core protein. In terms of assembly, forms a heterodimer with envelope glycoprotein E2. Interacts with mature core protein. Interacts with protease NS2. The heterodimer E1/E2 interacts with host CLDN1; this interaction plays a role in viral entry into host cell. Interacts with host SPSB2 (via C-terminus). Part of the viral assembly initiation complex composed of NS2, E1, E2, NS3, NS4A, NS5A and the mature core protein. Interacts with host NEURL3; this interaction prevents E1 binding to glycoprotein E2. As to quaternary structure, forms a heterodimer with envelope glycoprotein E1. Interacts with host CD81 and SCARB1 receptors; these interactions play a role in viral entry into host cell. Interacts with host EIF2AK2/PKR; this interaction inhibits EIF2AK2 and probably allows the virus to evade the innate immune response. Interacts with host CD209/DC-SIGN and CLEC4M/DC-SIGNR. Interact with host SPCS1; this interaction is essential for viral particle assembly. Interacts with protease NS2. The heterodimer E1/E2 interacts with host CLDN1; this interaction plays a role in viral entry into host cell. Part of the viral assembly initiation complex composed of NS2, E1, E2, NS3, NS4A, NS5A and the mature core protein. Interacts with host SLC3A2/4F2hc; the interaction may facilitate viral entry into host cell. Interacts with human PLSCR1. Homohexamer. Homoheptamer. Interacts with protease NS2. In terms of assembly, homodimer. Interacts with host SPCS1; this interaction is essential for viral particle assembly. Interacts with envelope glycoprotein E1. Interacts with envelope glycoprotein E2. Interacts with viroporin p7. Interacts with serine protease/helicase NS3. Part of the replication complex composed of NS2, NS3, NS4A, NS4B, NS5A and the RNA-directed RNA polymerase embedded in an ER-derived membranous web. Part of the viral assembly initiation complex composed of NS2, E1, E2, NS3, NS4A, NS5A and the mature core protein. As to quaternary structure, interacts with protease NS2. Interacts with non-structural protein 4A; this interaction stabilizes the folding of NS3 serine protease. NS3-NS4A interaction is essential for NS3 activation and allows membrane anchorage of the latter. NS3/NS4A complex also prevents phosphorylation of host IRF3, thus preventing the establishment of dsRNA induced antiviral state. Interacts with host MAVS; this interaction leads to the cleavage and inhibition of host MAVS. Interacts with host TICAM1; this interaction leads to the cleavage and inhibition of host TICAM1. Interacts with host TANK-binding kinase/TBK1; this interaction results in the inhibition of the association between TBK1 and IRF3, which leads to the inhibition of IRF3 activation. Interacts with host RBM24. Part of the replication complex composed of NS2, NS3, NS4A, NS4B, NS5A and the RNA-directed RNA polymerase embedded in an ER-derived membranous web. Part of the viral assembly initiation complex composed of NS2, E1, E2, NS3, NS4A, NS5A and the mature core protein. Interacts with NS3 serine protease; this interaction stabilizes the folding of NS3 serine protease. NS3-NS4A interaction is essential for NS3 activation and allows membrane anchorage of the latter. Interacts with non-structural protein 5A (via N-terminus). Part of the replication complex composed of NS2, NS3, NS4A, NS4B, NS5A and the RNA-directed RNA polymerase embedded in an ER-derived membranous web. Part of the viral assembly initiation complex composed of NS2, E1, E2, NS3, NS4A, NS5A and the mature core protein. In terms of assembly, homomultimer. Interacts with non-structural protein NS5A. Interacts with host PLA2G4C; this interaction likely initiates the recruitment of replication complexes to lipid droplets. Interacts with host STING; this interaction disrupts the interaction between STING and TBK1 thereby suppressing the interferon signaling. Part of the replication complex composed of NS2, NS3, NS4A, NS4B, NS5A and the RNA-directed RNA polymerase embedded in an ER-derived membranous web. As to quaternary structure, monomer. Homodimer; dimerization is required for RNA-binding. Interacts with the mature core protein. Interacts (via N-terminus) with non-structural protein 4A. Interacts with non-structural protein 4B. Interacts (via region D2) with RNA-directed RNA polymerase. Part of the viral assembly initiation complex composed of NS2, E1, E2, NS3, NS4A, NS5A and the mature core protein. Part of the replication complex composed of NS2, NS3, NS4A, NS4B, NS5A and the RNA-directed RNA polymerase embedded in an ER-derived membranous web. Interacts with host GRB2. Interacts with host BIN1. Interacts with host PIK3R1. Interacts with host SRCAP. Interacts with host FKBP8. Interacts (via C-terminus) with host VAPB (via MSP domain). Interacts with host EIF2AK2/PKR; this interaction leads to disruption of EIF2AK2 dimerization by NS5A and probably allows the virus to evade the innate immune response. Interacts (via N-terminus) with host PACSIN2 (via N-terminus); this interaction attenuates protein kinase C alpha-mediated phosphorylation of PACSIN2 by disrupting the interaction between PACSIN2 and PRKCA. Interacts (via N-terminus) with host SRC kinase (via SH2 domain). Interacts with most Src-family kinases. Interacts with host IFI27 and SKP2; promotes the ubiquitin-mediated proteasomal degradation of NS5A. Interacts with host GPS2. Interacts with host TNFRSF21; this interaction allows the modulation by the virus of JNK, p38 MAPK, STAT3, and Akt signaling pathways in a DR6-dependent manner. Interacts (via N-terminus) with host CIDEB (via N-terminus); this interaction seems to regulate the association of HCV particles with APOE. Interacts with host CHKA/Choline Kinase-alpha; CHKA bridges host PI4KA and NS5A and potentiates NS5A-stimulated PI4KA activity, which then facilitates the targeting of the ternary complex to the ER for viral replication. Interacts with host SPSB2 (via C-terminus); this interaction targets NS5A for ubiquitination and degradation. Interacts with host RAB18; this interaction may promote the association of NS5A and other replicase components with lipid droplets. Interacts (via region D2) with host PPIA/CYPA; the interaction stimulates RNA-binding ability of NS5A and is dependent on the peptidyl-prolyl cis-trans isomerase activity of PPIA/CYPA. Interacts with host TRIM14; this interaction induces the degradation of NS5A. Homooligomer. Interacts with non-structural protein 5A. Interacts with host VAPB. Interacts with host PRK2/PKN2. Interacts with host HNRNPA1 and SEPT6; these interactions facilitate viral replication. Part of the replication complex composed of NS2, NS3, NS4A, NS4B, NS5A and the RNA-directed RNA polymerase. It depends on Zn(2+) as a cofactor. Mg(2+) serves as cofactor. Specific enzymatic cleavages in vivo yield mature proteins. The structural proteins, core, E1, E2 and p7 are produced by proteolytic processing by host signal peptidases. The core protein precursor is synthesized as a 23 kDa, which is retained in the ER membrane through the hydrophobic signal peptide. Cleavage by the signal peptidase releases the 21 kDa mature core protein. The cleavage of the core protein precursor occurs between aminoacids 176 and 188 but the exact cleavage site is not known. Some degraded forms of the core protein appear as well during the course of infection. The other proteins (p7, NS2, NS3, NS4A, NS4B, NS5A and NS5B) are cleaved by the viral proteases. Autoprocessing between NS2 and NS3 is mediated by the NS2 cysteine protease catalytic domain and regulated by the NS3 N-terminal domain. Post-translationally, phosphorylated by host PKC and PKA. In terms of processing, ubiquitinated; mediated by UBE3A and leading to core protein subsequent proteasomal degradation. Highly N-glycosylated. Post-translationally, palmitoylation is required for NS2/3 autoprocessing and E2 recruitment to membranes. In terms of processing, palmitoylated. This modification may play a role in its polymerization or in protein-protein interactions. Phosphorylated on serines in a basal form termed p56. p58 is a hyperphosphorylated form of p56. p56 and p58 coexist in the cell in roughly equivalent amounts. Hyperphosphorylation is dependent on the presence of NS4A. Host CSNK1A1/CKI-alpha or RPS6KB1 kinases may be responsible for NS5A phosphorylation. Post-translationally, tyrosine phosphorylation is essential for the interaction with host SRC. In terms of processing, ubiquitinated. Ubiquitination, most probably at Lys-2350, mediated by host IFI27 and SKP2 leads to proteasomal degradation, restricting viral infection. Ubiquitination by host TRIM22 leads to interruption of viral replication. The N-terminus is phosphorylated by host PRK2/PKN2.

Its subcellular location is the host endoplasmic reticulum membrane. The protein resides in the host mitochondrion membrane. It localises to the virion. It is found in the host cytoplasm. The protein localises to the host nucleus. Its subcellular location is the host lipid droplet. The protein resides in the virion membrane. It localises to the host mitochondrion. It is found in the host cell membrane. The protein localises to the host perinuclear region. It catalyses the reaction Hydrolysis of four peptide bonds in the viral precursor polyprotein, commonly with Asp or Glu in the P6 position, Cys or Thr in P1 and Ser or Ala in P1'.. The catalysed reaction is a ribonucleoside 5'-triphosphate + H2O = a ribonucleoside 5'-diphosphate + phosphate + H(+). The enzyme catalyses ATP + H2O = ADP + phosphate + H(+). It carries out the reaction RNA(n) + a ribonucleoside 5'-triphosphate = RNA(n+1) + diphosphate. With respect to regulation, inhibited by the antiviral drug hexamethylene amiloride. Inhibition by amantadine appears to be genotype-dependent. Also inhibited by long-alkyl-chain iminosugar derivatives. Its activity is regulated as follows. Activity is up-regulated by PRK2/PKN2-mediated phosphorylation. Its function is as follows. Packages viral RNA to form a viral nucleocapsid, and promotes virion budding. Participates in the viral particle production as a result of its interaction with the non-structural protein 5A. Binds RNA and may function as a RNA chaperone to induce the RNA structural rearrangements taking place during virus replication. Modulates viral translation initiation by interacting with viral IRES and 40S ribosomal subunit. Affects various cell signaling pathways, host immunity and lipid metabolism. Prevents the establishment of cellular antiviral state by blocking the interferon-alpha/beta (IFN-alpha/beta) and IFN-gamma signaling pathways and by blocking the formation of phosphorylated STAT1 and promoting ubiquitin-mediated proteasome-dependent degradation of STAT1. Activates STAT3 leading to cellular transformation. Regulates the activity of cellular genes, including c-myc and c-fos. May repress the promoter of p53, and sequester CREB3 and SP110 isoform 3/Sp110b in the cytoplasm. Represses cell cycle negative regulating factor CDKN1A, thereby interrupting an important check point of normal cell cycle regulation. Targets transcription factors involved in the regulation of inflammatory responses and in the immune response: suppresses TNF-induced NF-kappa-B activation, and activates AP-1. Binds to dendritic cells (DCs) via C1QR1, resulting in down-regulation of T-lymphocytes proliferation. Alters lipid metabolism by interacting with hepatocellular proteins involved in lipid accumulation and storage. Induces up-regulation of FAS promoter activity, and thereby contributes to the increased triglyceride accumulation in hepatocytes (steatosis). In terms of biological role, forms a heterodimer with envelope glycoprotein E2, which mediates virus attachment to the host cell, virion internalization through clathrin-dependent endocytosis and fusion with host membrane. Fusion with the host cell is most likely mediated by both E1 and E2, through conformational rearrangements of the heterodimer required for fusion rather than a classical class II fusion mechanism. E1/E2 heterodimer binds host apolipoproteins such as APOB and ApoE thereby forming a lipo-viro-particle (LVP). APOE associated to the LVP allows the initial virus attachment to cell surface receptors such as the heparan sulfate proteoglycans (HSPGs), syndecan-1 (SDC1), syndecan-1 (SDC2), the low-density lipoprotein receptor (LDLR) and scavenger receptor class B type I (SCARB1). The cholesterol transfer activity of SCARB1 allows E2 exposure and binding of E2 to SCARB1 and the tetraspanin CD81. E1/E2 heterodimer binding on CD81 activates the epithelial growth factor receptor (EGFR) signaling pathway. Diffusion of the complex E1-E2-EGFR-SCARB1-CD81 to the cell lateral membrane allows further interaction with Claudin 1 (CLDN1) and occludin (OCLN) to finally trigger HCV entry. Forms a heterodimer with envelope glycoprotein E1, which mediates virus attachment to the host cell, virion internalization through clathrin-dependent endocytosis and fusion with host membrane. Fusion with the host cell is most likely mediated by both E1 and E2, through conformational rearrangements of the heterodimer required for fusion rather than a classical class II fusion mechanism. The interaction between envelope glycoprotein E2 and host apolipoprotein E/APOE allows the proper assembly, maturation and infectivity of the viral particles. This interaction is probably promoted via the up-regulation of cellular autophagy by the virus. E1/E2 heterodimer binds host apolipoproteins such as APOB and APOE thereby forming a lipo-viro-particle (LVP). APOE associated to the LVP allows the initial virus attachment to cell surface receptors such as the heparan sulfate proteoglycans (HSPGs), syndecan-1 (SDC1), syndecan-1 (SDC2), the low-density lipoprotein receptor (LDLR) and scavenger receptor class B type I (SCARB1). The cholesterol transfer activity of SCARB1 allows E2 exposure and binding of E2 to SCARB1 and the tetraspanin CD81. E1/E2 heterodimer binding on CD81 activates the epithelial growth factor receptor (EGFR) signaling pathway. Diffusion of the complex E1-E2-EGFR-SCARB1-CD81 to the cell lateral membrane allows further interaction with Claudin 1 (CLDN1) and occludin (OCLN) to finally trigger HCV entry. Inhibits host EIF2AK2/PKR activation, preventing the establishment of an antiviral state. Viral ligand for CD209/DC-SIGN and CLEC4M/DC-SIGNR, which are respectively found on dendritic cells (DCs), and on liver sinusoidal endothelial cells and macrophage-like cells of lymph node sinuses. These interactions allow the capture of circulating HCV particles by these cells and subsequent facilitated transmission to permissive cells such as hepatocytes and lymphocyte subpopulations. The interaction between E2 and host amino acid transporter complex formed by SLC3A2 and SLC7A5/LAT1 may facilitate viral entry into host cell. Functionally, ion channel protein that acts as a viroporin and plays an essential role in the assembly, envelopment and secretion of viral particles. Regulates the host cell secretory pathway, which induces the intracellular retention of viral glycoproteins and favors assembly of viral particles. Creates a pore in acidic organelles and releases Ca(2+) and H(+) in the cytoplasm of infected cells, leading to a productive viral infection. High levels of cytoplasmic Ca(2+) may trigger membrane trafficking and transport of viral ER-associated proteins to viroplasms, sites of viral genome replication. This ionic imbalance induces the assembly of the inflammasome complex, which triggers the maturation of pro-IL-1beta into IL-1beta through the action of caspase-1. Targets also host mitochondria and induces mitochondrial depolarization. In addition of its role as a viroporin, acts as a lipid raft adhesion factor. Its function is as follows. Cysteine protease required for the proteolytic auto-cleavage between the non-structural proteins NS2 and NS3. The N-terminus of NS3 is required for the function of NS2 protease (active region NS2-3). Promotes the initiation of viral particle assembly by mediating the interaction between structural and non-structural proteins. In terms of biological role, displays three enzymatic activities: serine protease with a chymotrypsin-like fold, NTPase and RNA helicase. NS3 serine protease, in association with NS4A, is responsible for the cleavages of NS3-NS4A, NS4A-NS4B, NS4B-NS5A and NS5A-NS5B. The NS3/NS4A complex prevents phosphorylation of host IRF3, thus preventing the establishment of dsRNA induced antiviral state. The NS3/NS4A complex induces host amino acid transporter component SLC3A2, thus contributing to HCV propagation. NS3 RNA helicase binds to RNA and unwinds both dsDNA and dsRNA in the 3' to 5' direction, and likely resolves RNA complicated stable secondary structures in the template strand. Binds a single ATP and catalyzes the unzipping of a single base pair of dsRNA. Inhibits host antiviral proteins TBK1 and IRF3 thereby preventing the establishment of an antiviral state. Cleaves host MAVS/CARDIF thereby preventing the establishment of an antiviral state. Cleaves host TICAM1/TRIF, thereby disrupting TLR3 signaling and preventing the establishment of an antiviral state. Peptide cofactor which forms a non-covalent complex with the N-terminal of NS3 serine protease. The NS3/NS4A complex prevents phosphorylation of host IRF3, thus preventing the establishment of dsRNA induced antiviral state. The NS3/NS4A complex induces host amino acid transporter component SLC3A2, thus contributing to HCV propagation. Functionally, induces a specific membrane alteration that serves as a scaffold for the virus replication complex. This membrane alteration gives rise to the so-called ER-derived membranous web that contains the replication complex. NS4B self-interaction contributes to its function in membranous web formation. Promotes host TRIF protein degradation in a CASP8-dependent manner thereby inhibiting host TLR3-mediated interferon signaling. Disrupts the interaction between STING and TBK1 contributing to the inhibition of interferon signaling. Its function is as follows. Phosphorylated protein that is indispensable for viral replication and assembly. Both hypo- and hyperphosphorylated states are required for the viral life cycle. The hyperphosphorylated form of NS5A is an inhibitor of viral replication. Involved in RNA-binding and especially in binding to the viral genome. Zinc is essential for RNA-binding. Participates in the viral particle production as a result of its interaction with the mature viral core protein. Its interaction with host VAPB may target the viral replication complex to vesicles. Down-regulates viral IRES translation initiation. Mediates interferon resistance, presumably by interacting with and inhibiting host EIF2AK2/PKR. Prevents BIN1-induced apoptosis. Acts as a transcriptional activator of some host genes important for viral replication when localized in the nucleus. Via the interaction with host PACSIN2, modulates lipid droplet formation in order to promote virion assembly. Modulates TNFRSF21/DR6 signaling pathway for viral propagation. In terms of biological role, RNA-dependent RNA polymerase that performs primer-template recognition and RNA synthesis during viral replication. Initiates RNA transcription/replication at a flavin adenine dinucleotide (FAD), resulting in a 5'- FAD cap on viral RNAs. In this way, recognition of viral 5' RNA by host pattern recognition receptors can be bypassed, thereby evading activation of antiviral pathways. In Homo sapiens (Human), this protein is Genome polyprotein.